The following is a 398-amino-acid chain: Elongation factor Tu (398 aa).

The 198-residue stretch at 10–207 folds into the tr-type G domain; that stretch reads KPHVNIGTIG…TVDSYIPEPE (198 aa). A G1 region spans residues 19-26; that stretch reads GHVDHGKT. 19 to 26 provides a ligand contact to GTP; the sequence is GHVDHGKT. T26 is a binding site for Mg(2+). Positions 63-67 are G2; that stretch reads GITIN. The segment at 84 to 87 is G3; it reads DAPG. GTP is bound by residues 84-88 and 139-142; these read DAPGH and NKVD. A G4 region spans residues 139–142; that stretch reads NKVD. Residues 177–179 form a G5 region; sequence SAL.

The protein belongs to the TRAFAC class translation factor GTPase superfamily. Classic translation factor GTPase family. EF-Tu/EF-1A subfamily. In terms of assembly, monomer.

The protein localises to the cytoplasm. The enzyme catalyses GTP + H2O = GDP + phosphate + H(+). Functionally, GTP hydrolase that promotes the GTP-dependent binding of aminoacyl-tRNA to the A-site of ribosomes during protein biosynthesis. This Streptococcus pyogenes serotype M28 (strain MGAS6180) protein is Elongation factor Tu.